The chain runs to 360 residues: Josephin-like protein (360 aa).

Residues 5–192 (ESKIYHERQR…NQLPLASNYR (188 aa)) enclose the Josephin domain. Cys18 (nucleophile) is an active-site residue. The Proton acceptor role is filled by His129.

The catalysed reaction is Thiol-dependent hydrolysis of ester, thioester, amide, peptide and isopeptide bonds formed by the C-terminal Gly of ubiquitin (a 76-residue protein attached to proteins as an intracellular targeting signal).. Its function is as follows. May act as a deubiquitinating enzyme. This is Josephin-like protein from Arabidopsis thaliana (Mouse-ear cress).